The following is a 149-amino-acid chain: MEDNAFTGAYSYNLDEKGRLMLPARLRVALSDTRLVLTCAIESCLWVFPRAQWDRFSSQISARASLFHAPSRAVLRRLIAPAQEVELDRAWRLFIPPSLREYAALEKDCLILGLSHCLEIWDRARYRAYLAESEADFRAGTETLQDLCL.

SpoVT-AbrB domains are found at residues 9–52 (AYSY…PRAQ) and 82–125 (AQEV…DRAR).

This sequence belongs to the MraZ family. As to quaternary structure, forms oligomers.

It localises to the cytoplasm. The protein resides in the nucleoid. This Treponema pallidum subsp. pallidum (strain SS14) protein is Transcriptional regulator MraZ.